Consider the following 146-residue polypeptide: MORN repeat-containing protein 4 (146 aa).

MORN repeat units follow at residues 16–38, 39–61, 62–84, and 85–107; these read YRGE…DGGT, YLGH…DGSR, YEGE…DNMT, and FEGE…DGSH.

As to quaternary structure, interacts with MYO3A.

The protein resides in the cytoplasm. It localises to the cell projection. Its subcellular location is the filopodium tip. It is found in the stereocilium. Functionally, plays a role in promoting axonal degeneration following neuronal injury by toxic insult or trauma. This Rattus norvegicus (Rat) protein is MORN repeat-containing protein 4 (Morn4).